A 483-amino-acid polypeptide reads, in one-letter code: Triacylglycerol lipase ptl3 (483 aa).

One can recognise a PNPLA domain in the interval 141 to 340 (LILSGGGTFG…DNDIPHAKLT (200 aa)). Positions 145 to 150 (GGGTFG) match the GXGXXG motif. Positions 172–176 (GSSAG) match the GXSXG motif. The active-site Nucleophile is the Ser-174. The active-site Proton acceptor is Asp-327.

It is found in the cytoplasm. The protein resides in the lipid droplet. It carries out the reaction a triacylglycerol + H2O = a diacylglycerol + a fatty acid + H(+). Its function is as follows. Lipid particle-localized triacylglycerol (TAG) lipase. The lipid droplet/particle is a lipid storage compartment which serves as a depot of energy and building blocks for membrane lipid biosynthesis. Involved in the mobilization of the non-polar storage lipids triacylglycerols (TAGs) from lipid particles by hydrolysis of TAGs, releasing and supplying specific fatty acids to the appropriate metabolic pathways. The chain is Triacylglycerol lipase ptl3 (ptl3) from Schizosaccharomyces pombe (strain 972 / ATCC 24843) (Fission yeast).